We begin with the raw amino-acid sequence, 272 residues long: L-aspartate dehydrogenase 3 (272 aa).

Residues Ala126 and Asn194 each contribute to the NAD(+) site. The active site involves His224.

The protein belongs to the L-aspartate dehydrogenase family.

The enzyme catalyses L-aspartate + NADP(+) + H2O = oxaloacetate + NH4(+) + NADPH + H(+). The catalysed reaction is L-aspartate + NAD(+) + H2O = oxaloacetate + NH4(+) + NADH + H(+). The protein operates within cofactor biosynthesis; NAD(+) biosynthesis; iminoaspartate from L-aspartate (dehydrogenase route): step 1/1. Specifically catalyzes the NAD or NADP-dependent dehydrogenation of L-aspartate to iminoaspartate. In Bordetella bronchiseptica (strain ATCC BAA-588 / NCTC 13252 / RB50) (Alcaligenes bronchisepticus), this protein is L-aspartate dehydrogenase 3.